A 623-amino-acid polypeptide reads, in one-letter code: MRLLLWWVLVLSLFLNPLRAVEEHETDAVDLFLIFNQINQLNQVIETYKKNPERSAEISLYNTQKNDLIKSLTSKVLNERDKIGIDINQNLKEQEKIKKRLSKSINGDDFYTFMKDRLSLDILLIDEILYRFIDKIRSSIDIFSEQKDVESISDAFLLRLGQFKLYTFPKNLGNVKMHELEQMFSDYELRLNTYTEVLRYIKNHPKEVLPKNLIMEVNMDFVLNKISKVLPFTTHSLQVSKIVLALTILALLLGLRKLITWLLALLLDRIFEIMQRNKKMHVNVQKSIVSPVSVFLALFSCDVALDIFYYPNASPPKVSMWVGAVYIMLLAWLVIALFKGYGEALVTNMATKSTHNFRKEVINLILKVVYFLIFIVALLGVLKQLGFNVSAIIASLGIGGLAVALAVKDVLANFFASVILLLDNSFSQGDWIVCGEVEGTVVEMGLRRTTIRAFDNALLSVPNSELAGKPIRNWSRRKVGRRIKMEIGLTYSSSQSALQLCVKDIKEMLENHPKIANGADSALQNVSDYRYMFKKDIVSIDDFLGYKNNLFVFLDQFADSSINILVYCFSKTVVWEEWLEVKEDVMLKIMGIVEKHHLSFAFPSQSLYVESLPEVSLKEGAKI.

5 helical membrane passes run 242–262 (IVLA…ITWL), 288–308 (IVSP…LDIF), 318–338 (VSMW…IALF), 361–381 (VINL…LLGV), and 387–407 (FNVS…ALAV).

This sequence belongs to the MscS (TC 1.A.23) family.

The protein localises to the cell membrane. This is an uncharacterized protein from Helicobacter pylori (strain ATCC 700392 / 26695) (Campylobacter pylori).